The chain runs to 675 residues: G-protein-signaling modulator 1 (675 aa).

Positions 1–509 (MAGPAPPVAD…DLLTKFQSSR (509 aa)) are mediates association with membranes. 9 TPR repeats span residues 28 to 61 (CLEL…GTED), 66 to 99 (SAIY…ARTI), 106 to 139 (AKAS…AQEQ), 146 to 181 (ARAL…PPDV), 183 to 202 (ETLC…VKEL), 209 to 242 (GRAY…AKEF), 249 to 282 (RRAY…SRQL), 289 to 322 (AQAC…AQEL), and 329 to 362 (GRAC…SQEI). The interval 364–487 (DRHGELTARM…VRVHVPRTSI (124 aa)) is interaction with STK11/LKB1. A disordered region spans residues 391–412 (SEKPDLAGYEAQGARPKRTQRL). S413 carries the post-translational modification Phosphoserine. R421 carries the omega-N-methylarginine modification. Positions 424-442 (LEREQNGDSHHSGDWRGPS) are enriched in basic and acidic residues. The disordered stretch occupies residues 424–492 (LEREQNGDSH…PRTSIPRAPS (69 aa)). Residues S445, S469, S471, S492, and S493 each carry the phosphoserine modification. Residues 454–469 (KYQEGPDAERRPREGS) show a composition bias toward basic and acidic residues. Residues 495–517 (EECFFDLLTKFQSSRMDDQRCPL) enclose the GoLoco 1 domain. S545 and S569 each carry phosphoserine. GoLoco domains lie at 548–570 (TEEF…RASV), 596–618 (GDDF…RCPP), and 630–652 (DEDF…RVDL). Disordered regions lie at residues 610–630 (RIDD…TMPD) and 644–675 (RMDE…PGAS).

This sequence belongs to the GPSM family. In terms of assembly, interacts with GNAI1, GNAI2 and GNAI3 preferentially in their GDP-bound state. May also interact with GNAO1. Interacts with STK11/LKB1 and MACF1. Interacts with INSC/inscuteable and FRMPD1. Phosphorylation regulates interaction with G(i/o) alpha. As to expression, expressed in intestinal cells.

The protein localises to the cytoplasm. It localises to the cytosol. The protein resides in the endoplasmic reticulum membrane. Its subcellular location is the golgi apparatus membrane. It is found in the cell membrane. Guanine nucleotide dissociation inhibitor (GDI) which functions as a receptor-independent activator of heterotrimeric G-protein signaling. Keeps G(i/o) alpha subunit in its GDP-bound form thus uncoupling heterotrimeric G-proteins signaling from G protein-coupled receptors. Controls spindle orientation and asymmetric cell fate of cerebral cortical progenitors. May also be involved in macroautophagy in intestinal cells. May play a role in drug addiction. The chain is G-protein-signaling modulator 1 (GPSM1) from Homo sapiens (Human).